The following is a 152-amino-acid chain: Endoribonuclease YbeY (152 aa).

The Zn(2+) site is built by H118, H122, and H128.

The protein belongs to the endoribonuclease YbeY family. Zn(2+) serves as cofactor.

It localises to the cytoplasm. Functionally, single strand-specific metallo-endoribonuclease involved in late-stage 70S ribosome quality control and in maturation of the 3' terminus of the 16S rRNA. This chain is Endoribonuclease YbeY, found in Lacticaseibacillus paracasei (strain ATCC 334 / BCRC 17002 / CCUG 31169 / CIP 107868 / KCTC 3260 / NRRL B-441) (Lactobacillus paracasei).